The following is a 37-amino-acid chain: Mu-thomitoxin-Hme1a (37 aa).

3 cysteine pairs are disulfide-bonded: Cys-2/Cys-18, Cys-9/Cys-22, and Cys-17/Cys-33. Phe-37 carries the phenylalanine amide modification.

The protein belongs to the neurotoxin 01 (U2-agtx) family. Contains 3 disulfide bonds. As to expression, expressed by the venom gland.

It localises to the secreted. Functionally, blocks the Nav1.2/SCN2A, Nav1.4/SCN4A, and Nav1.6/SCN8A sodium channels. Reduces the peak amplitude of the sodium current and negatively shifts the steady-state inactivation process. Does not shift the threshold potential of activation or the voltage corresponding to maximal current. Does not change the reversal potential of the sodium current. May act on site 1 of the receptor. The protein is Mu-thomitoxin-Hme1a of Heriaeus mellotteei (Crab spider).